Consider the following 241-residue polypeptide: Carboxy-S-adenosyl-L-methionine synthase (241 aa).

Residues tyrosine 38, 63 to 65 (GCS), 88 to 89 (DN), 116 to 117 (DI), asparagine 131, and arginine 198 each bind S-adenosyl-L-methionine.

The protein belongs to the class I-like SAM-binding methyltransferase superfamily. Cx-SAM synthase family. Homodimer.

It catalyses the reaction prephenate + S-adenosyl-L-methionine = carboxy-S-adenosyl-L-methionine + 3-phenylpyruvate + H2O. In terms of biological role, catalyzes the conversion of S-adenosyl-L-methionine (SAM) to carboxy-S-adenosyl-L-methionine (Cx-SAM). The polypeptide is Carboxy-S-adenosyl-L-methionine synthase (Actinobacillus pleuropneumoniae serotype 5b (strain L20)).